The primary structure comprises 718 residues: Heat shock 70 kDa protein 7, chloroplastic (718 aa).

Residues 1–92 (MASSAAQIHI…IDLGTTNSAV (92 aa)) constitute a chloroplast transit peptide. The span at 668–678 (QIGQSLYNQPQ) shows a compositional bias: polar residues. The interval 668-718 (QIGQSLYNQPQPGGADSPPGGEASSSSDTSSSAKGGDNGGDVIDADFTDSN) is disordered.

Belongs to the heat shock protein 70 (TC 1.A.33) family. DnaK subfamily.

Its subcellular location is the plastid. It is found in the chloroplast stroma. Acts redundantly with HSP70-6 in the thermotolerance of germinating seeds. Plays an important role in the protein precursor import into chloroplasts. Its function is as follows. In cooperation with other chaperones, Hsp70s are key components that facilitate folding of de novo synthesized proteins, assist translocation of precursor proteins into organelles, and are responsible for degradation of damaged protein under stress conditions. This Arabidopsis thaliana (Mouse-ear cress) protein is Heat shock 70 kDa protein 7, chloroplastic (HSP70-7).